The chain runs to 127 residues: Aspartate 1-decarboxylase (127 aa).

The active-site Schiff-base intermediate with substrate; via pyruvic acid is S25. Position 25 is a pyruvic acid (Ser) (S25). T57 contributes to the substrate binding site. The active-site Proton donor is Y58. A substrate-binding site is contributed by 73 to 75 (GAA).

Belongs to the PanD family. Heterooctamer of four alpha and four beta subunits. Pyruvate serves as cofactor. Is synthesized initially as an inactive proenzyme, which is activated by self-cleavage at a specific serine bond to produce a beta-subunit with a hydroxyl group at its C-terminus and an alpha-subunit with a pyruvoyl group at its N-terminus.

The protein resides in the cytoplasm. It carries out the reaction L-aspartate + H(+) = beta-alanine + CO2. It functions in the pathway cofactor biosynthesis; (R)-pantothenate biosynthesis; beta-alanine from L-aspartate: step 1/1. Functionally, catalyzes the pyruvoyl-dependent decarboxylation of aspartate to produce beta-alanine. The chain is Aspartate 1-decarboxylase from Clostridium botulinum (strain 657 / Type Ba4).